Consider the following 89-residue polypeptide: Cell division topological specificity factor (89 aa).

The protein belongs to the MinE family.

Prevents the cell division inhibition by proteins MinC and MinD at internal division sites while permitting inhibition at polar sites. This ensures cell division at the proper site by restricting the formation of a division septum at the midpoint of the long axis of the cell. The sequence is that of Cell division topological specificity factor from Proteus mirabilis (strain HI4320).